The following is a 448-amino-acid chain: Phosphoglucosamine mutase (448 aa).

Residue serine 104 is the Phosphoserine intermediate of the active site. Residues serine 104, aspartate 245, aspartate 247, and aspartate 249 each coordinate Mg(2+). Serine 104 is modified (phosphoserine).

The protein belongs to the phosphohexose mutase family. Mg(2+) serves as cofactor. Activated by phosphorylation.

The catalysed reaction is alpha-D-glucosamine 1-phosphate = D-glucosamine 6-phosphate. Functionally, catalyzes the conversion of glucosamine-6-phosphate to glucosamine-1-phosphate. This chain is Phosphoglucosamine mutase, found in Caulobacter vibrioides (strain ATCC 19089 / CIP 103742 / CB 15) (Caulobacter crescentus).